A 532-amino-acid chain; its full sequence is MRLLSVLLIGFLCLAGTYAQKYQLSPAYNDPYLTDDKTGTHDFWVQNASLPVFYGFHDWNFQDNSGIMEINGDEMHITGKIYPTVNMGDCHRYNVDLVFKKDKSGNVMPKKELRESAYVPHGPIDPATWKYYTFVQGKWTGFGCDPQNVVFSGAEGGMPLQLGYGANGKNGDNGISVWLIYGYTIVDINCNIRPIITQSPTQPPTQPPTYPPTQPPTQPPTQPPTYPPTYPPTYPPTYPPTYPPTHPPTYPPTYPPTQPPTQPPVQDCSTLECPEGFHCEIVNNRRTCVCDTTVPPTHPPTQSPTYPPTQPPTQPPTYPPTYPPTYPPTQPPRASCDNVRCPRGYHCECNHWENVARCVRNEEPTHRPKPPHHGCRPDSCARGEKCICVRGKIYCIPKTTCDQVRCPRKHHCECNRKGQVFCVPDCPKLTCKQVGCPENHECVSRRGELHCVYVRPPTGRWGDDLSDLGYNQASVEAAIDAYEAQRGQRPHNNIPSNNLHQENNDNLGDGFYDGVEIGFADGGFDVNDLNGF.

The signal sequence occupies residues 1–19 (MRLLSVLLIGFLCLAGTYA). Asn-47 carries N-linked (GlcNAc...) asparagine glycosylation. The segment at 197–265 (TQSPTQPPTQ…PTQPPTQPPV (69 aa)) is disordered. Residues 201–263 (TQPPTQPPTY…YPPTQPPTQP (63 aa)) are compositionally biased toward pro residues. In terms of domain architecture, Follistatin-like 1 spans 267 to 289 (DCSTLECPEGFHCEIVNNRRTCV). Residues 297–320 (THPPTQSPTYPPTQPPTQPPTYPP) form a disordered region. 3 Follistatin-like domains span residues 335–359 (SCDN…ARCV), 400–423 (TCDQ…VFCV), and 430–452 (TCKQ…LHCV).

In terms of assembly, binds to cotE. In terms of processing, O-glycosylated.

The protein resides in the spore wall. In terms of biological role, required for incorporation of cotE into the spore coat and for the formation of the outer layer. Has a cross-bridging function between cellulose and other coat proteins. In Dictyostelium discoideum (Social amoeba), this protein is Spore coat protein SP85 (pspB).